We begin with the raw amino-acid sequence, 31 residues long: MEALVYTFLLIGTLGIIFFAIFFREPPRIVR.

The chain crosses the membrane as a helical span at residues 3–23 (ALVYTFLLIGTLGIIFFAIFF).

It belongs to the PsbT family. PSII is composed of 1 copy each of membrane proteins PsbA, PsbB, PsbC, PsbD, PsbE, PsbF, PsbH, PsbI, PsbJ, PsbK, PsbL, PsbM, PsbT, PsbY, PsbZ, Psb30/Ycf12, at least 3 peripheral proteins of the oxygen-evolving complex and a large number of cofactors. It forms dimeric complexes.

The protein resides in the plastid. It localises to the chloroplast thylakoid membrane. Found at the monomer-monomer interface of the photosystem II (PS II) dimer, plays a role in assembly and dimerization of PSII. PSII is a light-driven water plastoquinone oxidoreductase, using light energy to abstract electrons from H(2)O, generating a proton gradient subsequently used for ATP formation. The polypeptide is Photosystem II reaction center protein T (Stigeoclonium helveticum (Green alga)).